Reading from the N-terminus, the 173-residue chain is Large ribosomal subunit protein uL5 (173 aa).

The protein belongs to the universal ribosomal protein uL5 family. Part of the 50S ribosomal subunit; contacts the 5S rRNA and probably tRNA. Forms a bridge to the 30S subunit in the 70S ribosome.

Its function is as follows. This is one of the proteins that bind and probably mediate the attachment of the 5S RNA into the large ribosomal subunit, where it forms part of the central protuberance. In the 70S ribosome it contacts protein S13 of the 30S subunit (bridge B1b), connecting the 2 subunits; this bridge is implicated in subunit movement. May contact the P site tRNA; the 5S rRNA and some of its associated proteins might help stabilize positioning of ribosome-bound tRNAs. The chain is Large ribosomal subunit protein uL5 from Nitrosopumilus maritimus (strain SCM1).